A 1052-amino-acid chain; its full sequence is F-box/WD repeat-containing protein 10 (1052 aa).

A WD 1 repeat occupies 169-206; the sequence is GLNQDITDVCFSPEKDHSSKSATSQVYWTAKTQHTSLP. In terms of domain architecture, F-box spans 276–323; sequence DFIRYLPIHLSKYILRMLDRHTLNKCASVSQHWAAMAQQVKMDLSAHG. 6 WD repeats span residues 409 to 447, 451 to 490, 493 to 532, 534 to 569, 572 to 609, and 611 to 652; these read SDTW…AIPV, GHAG…CTRI, GHQG…KTFR, KDPI…LVKT, GHEG…ERCL, and AFKH…KVLK. A coiled-coil region spans residues 690–719; that stretch reads YAVEKTKQKKNKEKEEEKEENSLMEILSKC. The tract at residues 766 to 805 is disordered; the sequence is LQSQGKSKSPRRDADDVEKAQKQGQLETPGKLPSHPKKKS. Residues 775 to 786 show a composition bias toward basic and acidic residues; that stretch reads PRRDADDVEKAQ. Positions 986 to 1010 form a coiled coil; that stretch reads VLLTVKEEKEHQEAKMKEYQAREST.

Its function is as follows. Probable substrate-recognition component of a SCF (SKP1-CUL1-F-box protein)-type E3 ubiquitin ligase complex which mediates the ubiquitination and subsequent proteasomal degradation of target proteins. Overexpression is leading to degradation of CBX5 and CBX1. The sequence is that of F-box/WD repeat-containing protein 10 (FBXW10) from Homo sapiens (Human).